The chain runs to 678 residues: DNA mismatch repair protein MutL (678 aa).

This sequence belongs to the DNA mismatch repair MutL/HexB family.

This protein is involved in the repair of mismatches in DNA. It is required for dam-dependent methyl-directed DNA mismatch repair. May act as a 'molecular matchmaker', a protein that promotes the formation of a stable complex between two or more DNA-binding proteins in an ATP-dependent manner without itself being part of a final effector complex. In Lactiplantibacillus plantarum (strain ATCC BAA-793 / NCIMB 8826 / WCFS1) (Lactobacillus plantarum), this protein is DNA mismatch repair protein MutL.